A 306-amino-acid chain; its full sequence is Brix domain-containing protein C4F8.04 (306 aa).

The segment at 16–49 is disordered; sequence KALHQKNKDKLERRKERAKEEEKDPEKKRLRLSE. Basic and acidic residues predominate over residues 21–42; the sequence is KNKDKLERRKERAKEEEKDPEK. In terms of domain architecture, Brix spans 94 to 283; it reads PKLLVTTSKR…LRMVQKGVWD (190 aa).

The sequence is that of Brix domain-containing protein C4F8.04 from Schizosaccharomyces pombe (strain 972 / ATCC 24843) (Fission yeast).